The primary structure comprises 541 residues: Man(5)GlcNAc(2)-PP-dolichol translocation protein RFT1 (541 aa).

The next 11 helical transmembrane spans lie at 16 to 36 (SGLL…AFIL), 45 to 62 (GIVN…TFLA), 85 to 105 (LLWL…WVWL), 123 to 143 (VLFF…WVLA), 154 to 176 (LAES…WLPH), 187 to 207 (LLYT…LLRS), 335 to 355 (LALL…QLAL), 376 to 396 (CLYV…FAAM), 414 to 434 (SFLV…FIMA), 470 to 490 (VLLG…AFLC), and 499 to 519 (LAHI…AFLT).

The protein belongs to the RFT1 family.

It localises to the endoplasmic reticulum membrane. Its pathway is protein modification; protein glycosylation. Intramembrane glycolipid transporter that operates in the biosynthetic pathway of dolichol-linked oligosaccharides, the glycan precursors employed in protein asparagine (N)-glycosylation. The sequential addition of sugars to dolichol pyrophosphate produces dolichol-linked oligosaccharides containing fourteen sugars, including two GlcNAcs, nine mannoses and three glucoses. Once assembled, the oligosaccharide is transferred from the lipid to nascent proteins by oligosaccharyltransferases. The assembly of dolichol-linked oligosaccharides begins on the cytosolic side of the endoplasmic reticulum membrane and finishes in its lumen. RFT1 could mediate the translocation of the cytosolically oriented intermediate DolPP-GlcNAc2Man5, produced by ALG11, into the ER lumen where dolichol-linked oligosaccharides assembly continues. However, the intramembrane lipid transporter activity could not be confirmed in vitro. The sequence is that of Man(5)GlcNAc(2)-PP-dolichol translocation protein RFT1 from Mus musculus (Mouse).